The sequence spans 270 residues: Co-chaperone protein DjlA (270 aa).

The Periplasmic segment spans residues 1-6 (MQYWGK). The helical transmembrane segment at 7-31 (IIGVAVALMMGGGFWGVVLGLLVGH) threads the bilayer. At 32-270 (MFDKARSRKM…ELIKEQKGFK (239 aa)) the chain is on the cytoplasmic side. In terms of domain architecture, J spans 204 to 270 (DACNVLGVKT…ELIKEQKGFK (67 aa)).

In terms of assembly, homodimer.

It localises to the cell inner membrane. Functionally, regulatory DnaK co-chaperone. Direct interaction between DnaK and DjlA is needed for the induction of the wcaABCDE operon, involved in the synthesis of a colanic acid polysaccharide capsule, possibly through activation of the RcsB/RcsC phosphotransfer signaling pathway. The colanic acid capsule may help the bacterium survive conditions outside the host. The chain is Co-chaperone protein DjlA from Salmonella paratyphi A (strain ATCC 9150 / SARB42).